Here is a 395-residue protein sequence, read N- to C-terminus: Chalcone synthase 7 (395 aa).

The active site involves Cys-169.

This sequence belongs to the thiolase-like superfamily. Chalcone/stilbene synthases family.

It carries out the reaction (E)-4-coumaroyl-CoA + 3 malonyl-CoA + 3 H(+) = 2',4,4',6'-tetrahydroxychalcone + 3 CO2 + 4 CoA. Its pathway is secondary metabolite biosynthesis; flavonoid biosynthesis. In terms of biological role, the primary product of this enzyme is 4,2',4',6'-tetrahydroxychalcone (also termed naringenin-chalcone or chalcone) which can under specific conditions spontaneously isomerize into naringenin. This chain is Chalcone synthase 7 (CSF7), found in Picea mariana (Black spruce).